The following is a 516-amino-acid chain: Probable metalloreductase AIM14 (516 aa).

7 helical membrane-spanning segments follow: residues 18-38, 64-84, 97-117, 128-148, 168-188, 195-215, and 217-237; these read IGYGYYTFGVSVGYILLLLLL, LHLPILLLFLEIAFLGHYSVI, LSYVLLFLNIFLTLRPNYILS, HMWLSRAISTFGVFHGLAFVI, LLGFIVWILLIILLITSTGVI, SFYMVHQINAFAISFIVPVHA, and PGVALPYTITIAVLLGLHALA. Residues 94–207 form the Ferric oxidoreductase domain; that stretch reads LGRLSYVLLF…MVHQINAFAI (114 aa). Residues 238-363 enclose the FAD-binding FR-type domain; that stretch reads RVSFCMSSAV…GGTGISLGLP (126 aa).

It belongs to the ferric reductase (FRE) family. AIM14 subfamily.

It is found in the membrane. In terms of biological role, probable cell surface metalloreductase. May be involved in iron or copper homeostasis. The protein is Probable metalloreductase AIM14 (AIM14) of Eremothecium gossypii (strain ATCC 10895 / CBS 109.51 / FGSC 9923 / NRRL Y-1056) (Yeast).